A 279-amino-acid chain; its full sequence is Coiled-coil domain-containing protein 117 (279 aa).

The interval 1–82 (MAALGRPFSG…REEEEDDDCP (82 aa)) is disordered. Residue arginine 48 is modified to Omega-N-methylarginine. The residue at position 53 (serine 53) is a Phosphoserine. Residues 63–72 (VSVHCKKKHK) show a composition bias toward basic residues. Residues 141–168 (QCEVARRKLQEIEDRIIDEDEEVEADRN) are a coiled coil. Residues 217-279 (LLSDKPKPSS…ATSTEEEMEL (63 aa)) form a disordered region. 2 stretches are compositionally biased toward polar residues: residues 224–235 (PSSNTKNYTGES) and 262–272 (SLYNSLETATS).

In terms of assembly, interacts with CIAO2B; the interaction is direct. Interacts with MMS19; the interaction is indirect.

It is found in the cytoplasm. The protein localises to the cytoskeleton. Its subcellular location is the spindle. The protein resides in the nucleus. Functionally, facilitates DNA repair, cell cycle progression, and cell proliferation through its interaction with CIAO2B. This chain is Coiled-coil domain-containing protein 117, found in Homo sapiens (Human).